A 429-amino-acid chain; its full sequence is Histidine--tRNA ligase (429 aa).

Belongs to the class-II aminoacyl-tRNA synthetase family. In terms of assembly, homodimer.

Its subcellular location is the cytoplasm. It catalyses the reaction tRNA(His) + L-histidine + ATP = L-histidyl-tRNA(His) + AMP + diphosphate + H(+). The polypeptide is Histidine--tRNA ligase (Streptococcus pneumoniae (strain Taiwan19F-14)).